The chain runs to 175 residues: Crossover junction endodeoxyribonuclease RuvC (175 aa).

Catalysis depends on residues aspartate 12, glutamate 72, and aspartate 144. Mg(2+) contacts are provided by aspartate 12, glutamate 72, and aspartate 144.

It belongs to the RuvC family. As to quaternary structure, homodimer which binds Holliday junction (HJ) DNA. The HJ becomes 2-fold symmetrical on binding to RuvC with unstacked arms; it has a different conformation from HJ DNA in complex with RuvA. In the full resolvosome a probable DNA-RuvA(4)-RuvB(12)-RuvC(2) complex forms which resolves the HJ. It depends on Mg(2+) as a cofactor.

The protein resides in the cytoplasm. The enzyme catalyses Endonucleolytic cleavage at a junction such as a reciprocal single-stranded crossover between two homologous DNA duplexes (Holliday junction).. The RuvA-RuvB-RuvC complex processes Holliday junction (HJ) DNA during genetic recombination and DNA repair. Endonuclease that resolves HJ intermediates. Cleaves cruciform DNA by making single-stranded nicks across the HJ at symmetrical positions within the homologous arms, yielding a 5'-phosphate and a 3'-hydroxyl group; requires a central core of homology in the junction. The consensus cleavage sequence is 5'-(A/T)TT(C/G)-3'. Cleavage occurs on the 3'-side of the TT dinucleotide at the point of strand exchange. HJ branch migration catalyzed by RuvA-RuvB allows RuvC to scan DNA until it finds its consensus sequence, where it cleaves and resolves the cruciform DNA. The sequence is that of Crossover junction endodeoxyribonuclease RuvC from Beijerinckia indica subsp. indica (strain ATCC 9039 / DSM 1715 / NCIMB 8712).